A 409-amino-acid polypeptide reads, in one-letter code: Elongation factor Tu, chloroplastic (409 aa).

In terms of domain architecture, tr-type G spans 10–214; it reads KQHVNIGTIG…NVDTYIPTPV (205 aa). The interval 19–26 is G1; sequence GHVDHGKT. 19–26 is a GTP binding site; it reads GHVDHGKT. Threonine 26 serves as a coordination point for Mg(2+). The interval 60–64 is G2; the sequence is GITIN. The segment at 81 to 84 is G3; the sequence is DCPG. GTP-binding positions include 81–85 and 136–139; these read DCPGH and NKED. Residues 136–139 are G4; it reads NKED. Residues 174 to 176 are G5; it reads SAL.

Belongs to the TRAFAC class translation factor GTPase superfamily. Classic translation factor GTPase family. EF-Tu/EF-1A subfamily.

The protein localises to the plastid. It localises to the chloroplast. The catalysed reaction is GTP + H2O = GDP + phosphate + H(+). Its function is as follows. GTP hydrolase that promotes the GTP-dependent binding of aminoacyl-tRNA to the A-site of ribosomes during protein biosynthesis. This is Elongation factor Tu, chloroplastic (tufA) from Tupiella akineta (Green alga).